The primary structure comprises 876 residues: Alanine--tRNA ligase (876 aa).

Zn(2+) is bound by residues H564, H568, C666, and H670.

The protein belongs to the class-II aminoacyl-tRNA synthetase family. Homotetramer. Requires Zn(2+) as cofactor.

It localises to the cytoplasm. The enzyme catalyses tRNA(Ala) + L-alanine + ATP = L-alanyl-tRNA(Ala) + AMP + diphosphate. Catalyzes the attachment of alanine to tRNA(Ala) in a two-step reaction: alanine is first activated by ATP to form Ala-AMP and then transferred to the acceptor end of tRNA(Ala). Also edits incorrectly charged Ser-tRNA(Ala) and Gly-tRNA(Ala) via its editing domain. The chain is Alanine--tRNA ligase from Salmonella paratyphi A (strain ATCC 9150 / SARB42).